Consider the following 563-residue polypeptide: MPVTDAATEPAYTVGDYLLDRLAELGVSEIFGVPGDYNLEFLDHIVAHPRLRWVGNANELNAGYAADGYGRLRGMSALVTTFGVGELSAANAVAGSYAEQVPVVHIVGGPSKDAQGTRRALHHSLGDGDFEHFFRVSREITCAQANLMPATARREIDRVLSEVREQKRPGYILLSTDVARFPTEPPEAALPRYTGGTSPRALAMFTEAAAALIGEHRITVLADLLVHRLQAIKELEALLAADVVPHATLMWGKSLLDESSPNFLGIYAGSASAPAVRTAIEEAPVLVTAGVVFTDMVSGFFSQRIDPARTIDVGQYQSSVAGEVFAPLEMGEALQALAAILTRRGVSSPPVASPPAEPLPPPPPREQPLTQKMVWDRVCTALTPGNVVLADQGTSFYGMADHRLPQGVTFIGQPLWGSIGYTLPAALGAAVAHPDRRTVLLIGDGAAQLTVQELGTFAREGLSPVIVVVNNDGYTVERAIHGETAPYNDIVGWKWTEVPNSLGVTDHLAFRVQTYGELDDALTAAARHQDRMVLVEVVLPRLEIPRLLVELVRPTSPDGSPRR.

Position 59 (E59) interacts with thiamine diphosphate. A disordered region spans residues 348–367; the sequence is SPPVASPPAEPLPPPPPREQ. The span at 351 to 366 shows a compositional bias: pro residues; sequence VASPPAEPLPPPPPRE. Residues 394 to 476 form a thiamine pyrophosphate binding region; sequence TSFYGMADHR…VVVNNDGYTV (83 aa). Residues D444, N471, and G473 each coordinate Mg(2+).

This sequence belongs to the TPP enzyme family. A metal cation is required as a cofactor. Requires thiamine diphosphate as cofactor.

Decarboxylates branched-chain and aromatic alpha-keto acids to aldehydes. In Mycobacterium avium (strain 104), this protein is Alpha-keto-acid decarboxylase (kdc).